The sequence spans 336 residues: UDP-galactose transporter 1 (336 aa).

A run of 9 helical transmembrane segments spans residues 11 to 31 (LAIL…KWIF), 38 to 58 (FPLS…YIVI), 83 to 103 (FVFC…PVSF), 131 to 151 (IWAS…TELS), 154 to 174 (MFGF…TILA), 193 to 213 (APFA…SGIL), 227 to 247 (IIIL…FYVI), 254 to 274 (TFNV…WLIF), and 278 to 298 (ISYM…FYGY).

It belongs to the TPT transporter family. TPT (TC 2.A.7.9) subfamily.

It localises to the membrane. Functionally, nucleotide sugar transporter that specifically transports UDP-galactose. This is UDP-galactose transporter 1 from Arabidopsis thaliana (Mouse-ear cress).